The chain runs to 181 residues: Caltractin ICL1d (181 aa).

Residues 1-29 (MARRGQQPPPQQAPPAQKNQTGKFNPAEF) form a disordered region. EF-hand domains are found at residues 37 to 72 (EEVL…LGFE), 73 to 108 (AKNQ…RISE), 110 to 145 (DSKA…LGET), and 146 to 181 (MDDS…KTFA). The Ca(2+) site is built by Asp50, Asp52, Thr54, Ser56, Glu61, Asp86, Asp88, Ser90, Gln92, and Glu97.

Belongs to the centrin family. In terms of assembly, monomer.

It is found in the cytoplasm. The protein localises to the cytoskeleton. Functionally, plays a fundamental role in microtubule organizing center structure and function. Component of the infraciliary lattice (ICL) and the ciliary basal bodies. This Paramecium tetraurelia protein is Caltractin ICL1d (Icl1d).